A 398-amino-acid chain; its full sequence is Bifunctional enzyme IspD/IspF (398 aa).

A 2-C-methyl-D-erythritol 4-phosphate cytidylyltransferase region spans residues 1–234 (MANSRRTAAI…SRLAALLGDI (234 aa)). Residues 235–398 (RTGTGYDVHA…LPWGPNGLSG (164 aa)) form a 2-C-methyl-D-erythritol 2,4-cyclodiphosphate synthase region. Residues Asp-241 and His-243 each coordinate a divalent metal cation. 4-CDP-2-C-methyl-D-erythritol 2-phosphate-binding positions include 241–243 (DVH) and 267–268 (HS). Residue His-275 coordinates a divalent metal cation. 4-CDP-2-C-methyl-D-erythritol 2-phosphate is bound by residues 289-291 (DIG), 365-368 (TTSE), Phe-372, and Arg-375.

The protein in the N-terminal section; belongs to the IspD/TarI cytidylyltransferase family. IspD subfamily. It in the C-terminal section; belongs to the IspF family. A divalent metal cation serves as cofactor.

It carries out the reaction 2-C-methyl-D-erythritol 4-phosphate + CTP + H(+) = 4-CDP-2-C-methyl-D-erythritol + diphosphate. It catalyses the reaction 4-CDP-2-C-methyl-D-erythritol 2-phosphate = 2-C-methyl-D-erythritol 2,4-cyclic diphosphate + CMP. The protein operates within isoprenoid biosynthesis; isopentenyl diphosphate biosynthesis via DXP pathway; isopentenyl diphosphate from 1-deoxy-D-xylulose 5-phosphate: step 2/6. Its pathway is isoprenoid biosynthesis; isopentenyl diphosphate biosynthesis via DXP pathway; isopentenyl diphosphate from 1-deoxy-D-xylulose 5-phosphate: step 4/6. Functionally, bifunctional enzyme that catalyzes the formation of 4-diphosphocytidyl-2-C-methyl-D-erythritol from CTP and 2-C-methyl-D-erythritol 4-phosphate (MEP) (IspD), and catalyzes the conversion of 4-diphosphocytidyl-2-C-methyl-D-erythritol 2-phosphate (CDP-ME2P) to 2-C-methyl-D-erythritol 2,4-cyclodiphosphate (ME-CPP) with a corresponding release of cytidine 5-monophosphate (CMP) (IspF). In Rhodopseudomonas palustris (strain BisA53), this protein is Bifunctional enzyme IspD/IspF.